A 39-amino-acid chain; its full sequence is Protein MchX (39 aa).

Residues 15 to 37 (SALSSTLLLSLIMSATLLEYSLS) traverse the membrane as a helical segment.

It localises to the cell inner membrane. Its function is as follows. Required for microcin H47 production. Possibly involved in a regulatory loop modulating its own expression and that of MchI and MchB. In Escherichia coli, this protein is Protein MchX (mchX).